Consider the following 547-residue polypeptide: Chaperonin GroEL (547 aa).

ATP contacts are provided by residues 30–33 (TLGP), Lys-51, 87–91 (DGTTT), Gly-415, and Asp-496. The segment at 528–547 (DKSDMPAMPPGGMGGMGGMY) is disordered. The segment covering 538 to 547 (GGMGGMGGMY) has biased composition (gly residues).

Belongs to the chaperonin (HSP60) family. In terms of assembly, forms a cylinder of 14 subunits composed of two heptameric rings stacked back-to-back. Interacts with the co-chaperonin GroES.

It localises to the cytoplasm. The catalysed reaction is ATP + H2O + a folded polypeptide = ADP + phosphate + an unfolded polypeptide.. Functionally, together with its co-chaperonin GroES, plays an essential role in assisting protein folding. The GroEL-GroES system forms a nano-cage that allows encapsulation of the non-native substrate proteins and provides a physical environment optimized to promote and accelerate protein folding. In Chlorobium luteolum (strain DSM 273 / BCRC 81028 / 2530) (Pelodictyon luteolum), this protein is Chaperonin GroEL.